Consider the following 191-residue polypeptide: Pyridoxal 5'-phosphate synthase subunit PdxT (191 aa).

46–48 is an L-glutamine binding site; that stretch reads GES. Cys-78 (nucleophile) is an active-site residue. L-glutamine-binding positions include Arg-105 and 134–135; that span reads IR. Residues His-170 and Glu-172 each act as charge relay system in the active site.

Belongs to the glutaminase PdxT/SNO family. In terms of assembly, in the presence of PdxS, forms a dodecamer of heterodimers. Only shows activity in the heterodimer.

The catalysed reaction is aldehydo-D-ribose 5-phosphate + D-glyceraldehyde 3-phosphate + L-glutamine = pyridoxal 5'-phosphate + L-glutamate + phosphate + 3 H2O + H(+). It carries out the reaction L-glutamine + H2O = L-glutamate + NH4(+). It participates in cofactor biosynthesis; pyridoxal 5'-phosphate biosynthesis. In terms of biological role, catalyzes the hydrolysis of glutamine to glutamate and ammonia as part of the biosynthesis of pyridoxal 5'-phosphate. The resulting ammonia molecule is channeled to the active site of PdxS. The chain is Pyridoxal 5'-phosphate synthase subunit PdxT from Carboxydothermus hydrogenoformans (strain ATCC BAA-161 / DSM 6008 / Z-2901).